Consider the following 520-residue polypeptide: Laccase-1 (520 aa).

Residues 1–19 (MRLSNALVLVAACISSVVA) form the signal peptide. Plastocyanin-like domains follow at residues 21 to 145 (TRTF…FIVY), 157 to 305 (VDDE…LTLA), and 375 to 488 (TVPV…FAEA). The Cu cation site is built by H82 and H84. 2 disulfide bridges follow: C103–C509 and C135–C229. N108 carries an N-linked (GlcNAc...) asparagine glycan. Cu cation contacts are provided by H127 and H129. Residues N239 and N299 are each glycosylated (N-linked (GlcNAc...) asparagine). Cu cation is bound by residues H417, H420, H422, H470, C471, H472, and H476. The N-linked (GlcNAc...) asparagine glycan is linked to N492.

It belongs to the multicopper oxidase family. Cu cation serves as cofactor.

The protein resides in the secreted. The enzyme catalyses 4 hydroquinone + O2 = 4 benzosemiquinone + 2 H2O. Lignin degradation and detoxification of lignin-derived products. The protein is Laccase-1 (lcc1) of Agaricus bisporus (White button mushroom).